The sequence spans 460 residues: DL-alanine permease SerP2 (460 aa).

The next 12 membrane-spanning stretches (helical) occupy residues 26-46 (LIAI…KSIH), 47-67 (LTGP…YILL), 98-118 (FIQW…LIAI), 124-144 (FWLP…LLTL), 160-180 (FGMI…ILIF), 209-229 (FFES…IGMT), 246-266 (QIPI…MSIY), 278-298 (FVTI…NFVV), 344-364 (ALLF…IPAI), 368-388 (FVFI…MTLI), 410-430 (HIFI…LFCF), and 433-453 (TIIP…FTFF).

This sequence belongs to the amino acid-polyamine-organocation (APC) superfamily. Amino acid transporter (AAT) (TC 2.A.3.1) family.

Its subcellular location is the cell membrane. Its function is as follows. Transports DL-alanine, DL-serine and glycine. The preferred substrate is DL-alanine. L-serine is a low-affinity substrate. This chain is DL-alanine permease SerP2, found in Lactococcus lactis subsp. cremoris (strain MG1363).